A 332-amino-acid polypeptide reads, in one-letter code: Fructose-1,6-bisphosphatase class 1 (332 aa).

Residues Glu89, Asp110, Leu112, and Asp113 each coordinate Mg(2+). Residues 113 to 116 (DGSS), Asn206, Tyr239, 257 to 259 (YLY), and Lys269 each bind substrate. Position 275 (Glu275) interacts with Mg(2+).

Belongs to the FBPase class 1 family. Homotetramer. Mg(2+) serves as cofactor.

The protein resides in the cytoplasm. It carries out the reaction beta-D-fructose 1,6-bisphosphate + H2O = beta-D-fructose 6-phosphate + phosphate. It participates in carbohydrate biosynthesis; gluconeogenesis. The sequence is that of Fructose-1,6-bisphosphatase class 1 from Escherichia coli (strain ATCC 8739 / DSM 1576 / NBRC 3972 / NCIMB 8545 / WDCM 00012 / Crooks).